The primary structure comprises 241 residues: Biosynthetic peptidoglycan transglycosylase (241 aa).

Residues 18–38 (GVIGIIALWMAGILIFAFLPV) form a helical membrane-spanning segment.

This sequence belongs to the glycosyltransferase 51 family.

The protein localises to the cell inner membrane. It carries out the reaction [GlcNAc-(1-&gt;4)-Mur2Ac(oyl-L-Ala-gamma-D-Glu-L-Lys-D-Ala-D-Ala)](n)-di-trans,octa-cis-undecaprenyl diphosphate + beta-D-GlcNAc-(1-&gt;4)-Mur2Ac(oyl-L-Ala-gamma-D-Glu-L-Lys-D-Ala-D-Ala)-di-trans,octa-cis-undecaprenyl diphosphate = [GlcNAc-(1-&gt;4)-Mur2Ac(oyl-L-Ala-gamma-D-Glu-L-Lys-D-Ala-D-Ala)](n+1)-di-trans,octa-cis-undecaprenyl diphosphate + di-trans,octa-cis-undecaprenyl diphosphate + H(+). Its pathway is cell wall biogenesis; peptidoglycan biosynthesis. In terms of biological role, peptidoglycan polymerase that catalyzes glycan chain elongation from lipid-linked precursors. This chain is Biosynthetic peptidoglycan transglycosylase, found in Yersinia pseudotuberculosis serotype O:3 (strain YPIII).